The sequence spans 222 residues: 7-cyano-7-deazaguanine synthase (222 aa).

11–21 (FSGGQDSTTCL) provides a ligand contact to ATP. Zn(2+) is bound by residues Cys-187, Cys-195, Cys-198, and Cys-201.

The protein belongs to the QueC family. The cofactor is Zn(2+).

It carries out the reaction 7-carboxy-7-deazaguanine + NH4(+) + ATP = 7-cyano-7-deazaguanine + ADP + phosphate + H2O + H(+). The protein operates within purine metabolism; 7-cyano-7-deazaguanine biosynthesis. Catalyzes the ATP-dependent conversion of 7-carboxy-7-deazaguanine (CDG) to 7-cyano-7-deazaguanine (preQ(0)). The sequence is that of 7-cyano-7-deazaguanine synthase from Actinobacillus pleuropneumoniae serotype 5b (strain L20).